The primary structure comprises 1397 residues: DNA-directed RNA polymerase subunit beta' (1397 aa).

Positions 75, 77, 90, and 93 each coordinate Zn(2+). 3 residues coordinate Mg(2+): Asp-465, Asp-467, and Asp-469. The Zn(2+) site is built by Cys-819, Cys-893, Cys-900, and Cys-903.

The protein belongs to the RNA polymerase beta' chain family. The RNAP catalytic core consists of 2 alpha, 1 beta, 1 beta' and 1 omega subunit. When a sigma factor is associated with the core the holoenzyme is formed, which can initiate transcription. Mg(2+) serves as cofactor. Zn(2+) is required as a cofactor.

The catalysed reaction is RNA(n) + a ribonucleoside 5'-triphosphate = RNA(n+1) + diphosphate. In terms of biological role, DNA-dependent RNA polymerase catalyzes the transcription of DNA into RNA using the four ribonucleoside triphosphates as substrates. The protein is DNA-directed RNA polymerase subunit beta' of Acinetobacter baumannii (strain ACICU).